The following is a 184-amino-acid chain: TRAF-interacting protein with FHA domain-containing protein A (184 aa).

Threonine 9 carries the post-translational modification Phosphothreonine; by ALPK1. Residues 47-103 (VKFGRNSNICHYTFQDKQVSRVQFSLQLFKKFNSSVLSFEIKNMSKKTNLIVDSREL) form the FHA domain. The disordered stretch occupies residues 165-184 (TYSLCSSQSSSPTEMDENES). Residues 167–177 (SLCSSQSSSPT) show a composition bias toward polar residues.

It belongs to the TIFA family. Homooligomer; homooligomerizes following phosphorylation at Thr-9. Interacts with IRAK1, TRAF2 and TRAF6. Interacts with TIFAB; binding to TIFAB inhibits TRAF6 activation, possibly by inducing a conformational change in TIFA. Interacts with ZCCHC11; binding to ZCCHC11 suppresses the TRAF6-dependent activation of NF-kappa-B. Post-translationally, phosphorylated at Thr-9 following detection of ADP-D-glycero-beta-D-manno-heptose (ADP-Heptose) by ALPK1. Phosphorylation at Thr-9 by ALPK1 leads to the formation of an intermolecular binding between the FHA domain and phosphorylated Thr-9, promoting TIFA oligomerization and TIFA-mediated NF-kappa-B activation.

The protein localises to the cytoplasm. In terms of biological role, adapter molecule that plays a key role in the activation of pro-inflammatory NF-kappa-B signaling following detection of bacterial pathogen-associated molecular pattern metabolites (PAMPs). Promotes activation of an innate immune response by inducing the oligomerization and polyubiquitination of TRAF6, which leads to the activation of TAK1 and IKK through a proteasome-independent mechanism. TIFA-dependent innate immune response is triggered by ADP-D-glycero-beta-D-manno-heptose (ADP-Heptose), a potent PAMP present in all Gram-negative and some Gram-positive bacteria: ADP-Heptose is recognized by ALPK1, which phosphorylates TIFA at Thr-9, leading to TIFA homooligomerization and subsequent activation of pro-inflammatory NF-kappa-B signaling. The protein is TRAF-interacting protein with FHA domain-containing protein A of Homo sapiens (Human).